The primary structure comprises 145 residues: uncharacterized protein (145 aa).

The protein belongs to the methyltransferase superfamily.

Its function is as follows. Probable methyltransferase. This is an uncharacterized protein from Schizosaccharomyces pombe (strain 972 / ATCC 24843) (Fission yeast).